Reading from the N-terminus, the 118-residue chain is Probable dihydroneopterin aldolase (118 aa).

Substrate contacts are provided by residues E21, Y53, and 72 to 73 (IE). Catalysis depends on K98, which acts as the Proton donor/acceptor.

The protein belongs to the DHNA family.

It carries out the reaction 7,8-dihydroneopterin = 6-hydroxymethyl-7,8-dihydropterin + glycolaldehyde. The protein operates within cofactor biosynthesis; tetrahydrofolate biosynthesis; 2-amino-4-hydroxy-6-hydroxymethyl-7,8-dihydropteridine diphosphate from 7,8-dihydroneopterin triphosphate: step 3/4. Functionally, catalyzes the conversion of 7,8-dihydroneopterin to 6-hydroxymethyl-7,8-dihydropterin. This chain is Probable dihydroneopterin aldolase (folB), found in Synechocystis sp. (strain ATCC 27184 / PCC 6803 / Kazusa).